The following is a 193-amino-acid chain: Bcl-2-binding component 3, isoforms 1/2 (193 aa).

Disordered stretches follow at residues 1-28 (MARA…FPLG) and 71-138 (ALGG…REIG). Serine 10 is modified (phosphoserine). The segment covering 71–82 (ALGGSRWPGGPR) has biased composition (low complexity). The BH3 signature appears at 137–151 (IGAQLRRMADDLNAQ).

This sequence belongs to the Bcl-2 family. As to quaternary structure, interacts with MCL1 and BCL2A1. Interacts (via BH3 domain) with BCL2. Interacts with BCL2L1/BCL-XL. Interacts (via BH3 domain) with NOL3/ARC (via CARD domain); this interaction prevents BBC3 association with BCL2 and results in CASP8 activation. In terms of tissue distribution, ubiquitously expressed.

It localises to the mitochondrion. Essential mediator of p53/TP53-dependent and p53/TP53-independent apoptosis. Promotes partial unfolding of BCL2L1 and dissociation of BCL2L1 from p53/TP53, releasing the bound p53/TP53 to induce apoptosis. Regulates ER stress-induced neuronal apoptosis. The polypeptide is Bcl-2-binding component 3, isoforms 1/2 (BBC3) (Homo sapiens (Human)).